The following is a 96-amino-acid chain: Small ribosomal subunit protein bS6 (96 aa).

This sequence belongs to the bacterial ribosomal protein bS6 family.

Functionally, binds together with bS18 to 16S ribosomal RNA. This is Small ribosomal subunit protein bS6 from Acidothermus cellulolyticus (strain ATCC 43068 / DSM 8971 / 11B).